We begin with the raw amino-acid sequence, 292 residues long: NAD kinase (292 aa).

Asp73 functions as the Proton acceptor in the catalytic mechanism. NAD(+) is bound by residues Asp73 to Gly74, Asn147 to Glu148, His158, Arg175, Asp177, Thr188 to Ser193, and Gln247.

This sequence belongs to the NAD kinase family. A divalent metal cation serves as cofactor.

It localises to the cytoplasm. The catalysed reaction is NAD(+) + ATP = ADP + NADP(+) + H(+). Its function is as follows. Involved in the regulation of the intracellular balance of NAD and NADP, and is a key enzyme in the biosynthesis of NADP. Catalyzes specifically the phosphorylation on 2'-hydroxyl of the adenosine moiety of NAD to yield NADP. The protein is NAD kinase of Shigella dysenteriae serotype 1 (strain Sd197).